Reading from the N-terminus, the 506-residue chain is CTL-like protein DDB_G0269978 (506 aa).

Residues Asn15 and Asn41 are each glycosylated (N-linked (GlcNAc...) asparagine). 12 helical membrane-spanning segments follow: residues 91 to 111, 126 to 146, 161 to 181, 182 to 202, 226 to 246, 256 to 276, 279 to 299, 323 to 343, 345 to 367, 371 to 393, 416 to 436, and 447 to 467; these read LLYSVLFAIQMVLFITMTVIA, LQGLLIIAISIPLILAFFLIW, SFFSLMITGILFIGLLIGNGW, YSWAIVFGITLISLIFFYFAF, TLLVSFVCLIISCVYYNIWLF, SYWTAWSYMKFMFLVFNLYWT, VITYTCYSVVSGLVASWYFFA, FGSIAFGSLLVCLVQMVQFIC, GFARVPGLTSLFCNCLQFIALIF, LYTFNIYTFSMVSIYGQSFCNSS, ITMLSVSLSMFLIIGFIVTMI, and WLYVQLVMFLFILYKPFDIIF.

This sequence belongs to the CTL (choline transporter-like) family.

It is found in the membrane. The chain is CTL-like protein DDB_G0269978 from Dictyostelium discoideum (Social amoeba).